Consider the following 324-residue polypeptide: Homeobox protein engrailed-2 (324 aa).

3 disordered regions span residues 1–59, 89–174, and 215–240; these read MEEK…HQHP, GGAR…VLKA, and DRPS…RPRT. Positions 89 to 110 are enriched in gly residues; that stretch reads GGARGGEGGAGTTEGGGGGAGG. Residues 235 to 294 constitute a DNA-binding region (homeobox); that stretch reads DKRPRTAFTAEQLQRLKAEFQTNRYLTEQRRQSLAQELSLNESQIKIWFQNKRAKIKKAT.

Belongs to the engrailed homeobox family. Cerebellar granule cells.

Its subcellular location is the nucleus. This chain is Homeobox protein engrailed-2 (En2), found in Mus musculus (Mouse).